A 377-amino-acid chain; its full sequence is Alanine racemase (377 aa).

Lys-33 serves as the catalytic Proton acceptor; specific for D-alanine. Position 33 is an N6-(pyridoxal phosphate)lysine (Lys-33). Substrate is bound at residue Arg-134. The active-site Proton acceptor; specific for L-alanine is Tyr-267. Met-315 provides a ligand contact to substrate.

The protein belongs to the alanine racemase family. Pyridoxal 5'-phosphate is required as a cofactor.

It catalyses the reaction L-alanine = D-alanine. It participates in amino-acid biosynthesis; D-alanine biosynthesis; D-alanine from L-alanine: step 1/1. Its function is as follows. Catalyzes the interconversion of L-alanine and D-alanine. May also act on other amino acids. This chain is Alanine racemase (alr), found in Treponema pallidum subsp. pallidum (strain SS14).